Consider the following 129-residue polypeptide: Azurin iso-2 (129 aa).

One can recognise a Plastocyanin-like domain in the interval 1–129 (ASCETTVTSG…MMRGTLKLEE (129 aa)). Residues Cys-3 and Cys-26 are joined by a disulfide bond. The Cu cation site is built by His-46, Cys-112, His-117, and Met-121.

It localises to the periplasm. This methylothroph organism uses azurin in the oxidation of methylamine. Iso-2 is probably the acceptor of electrons from methylamine dehydrogenase. The sequence is that of Azurin iso-2 from Methylomonas sp. (strain J).